Consider the following 227-residue polypeptide: Small ribosomal subunit protein uS3 (227 aa).

One can recognise a KH type-2 domain in the interval 39–107; sequence VREFLDKRLV…PVHINIEEVR (69 aa).

Belongs to the universal ribosomal protein uS3 family. As to quaternary structure, part of the 30S ribosomal subunit. Forms a tight complex with proteins S10 and S14.

Binds the lower part of the 30S subunit head. Binds mRNA in the 70S ribosome, positioning it for translation. This is Small ribosomal subunit protein uS3 from Marinobacter nauticus (strain ATCC 700491 / DSM 11845 / VT8) (Marinobacter aquaeolei).